Here is a 365-residue protein sequence, read N- to C-terminus: Caffeic acid 3-O-methyltransferase 1 (365 aa).

Residue 130–136 participates in substrate binding; that stretch reads MNQDKVL. A substrate binding region spans residues 162–180; it reads AFEYHGTDPRFNKVFNKGM. S-adenosyl-L-methionine is bound by residues G208, D231, D251, M252, and K265. The Proton acceptor role is filled by H269.

The protein belongs to the class I-like SAM-binding methyltransferase superfamily. Cation-independent O-methyltransferase family. COMT subfamily. In terms of assembly, homodimer.

It carries out the reaction (E)-caffeate + S-adenosyl-L-methionine = (E)-ferulate + S-adenosyl-L-homocysteine + H(+). Its pathway is aromatic compound metabolism; phenylpropanoid biosynthesis. Catalyzes the conversion of caffeic acid to ferulic acid and of 5-hydroxyferulic acid to sinapic acid. The resulting products may subsequently be converted to the corresponding alcohols that are incorporated into lignins. In Populus kitakamiensis (Aspen), this protein is Caffeic acid 3-O-methyltransferase 1 (HOMT1).